Reading from the N-terminus, the 358-residue chain is MESADFYEAEPRPPMSSHLQSPPHAPSNAAFGFPRGAGPAPPPAPPAAPEPLGGICEHETSIDISAYIDPAAFNDEFLADLFQHSRQQEKAKAAAGPAGGGGDFDYPGAPAGPGGAVMSAGAHGPPPGYGCAAAGYLDGRLEPLYERVGAPALRPLVIKQEPREEDEAKQLALAGLFPYQPPPPPPPPHPHASPAHLAAPHLQFQIAHCGQTTMHLQPGHPTPPPTPVPSPHPAPAMGAAGLPGPGGSLKGLAGPHPDLRTGGGGGGGAGAGKAKKSVDKNSNEYRVRRERNNIAVRKSRDKAKQRNVETQQKVLELTSDNDRLRKRVEQLSRELDTLRGIFRQLPESSLVKAMGNCA.

A disordered region spans residues 1–55 (MESADFYEAEPRPPMSSHLQSPPHAPSNAAFGFPRGAGPAPPPAPPAAPEPLGGI). The tract at residues 1 to 70 (MESADFYEAE…SIDISAYIDP (70 aa)) is required to repress E2F1:TFDP1-mediated transcription, to inhibit cell cycle and to induce adipocyte differentiation. Over residues 29–38 (AAFGFPRGAG) the composition is skewed to low complexity. The segment covering 39–49 (PAPPPAPPAAP) has biased composition (pro residues). Residues 54–72 (GICEHETSIDISAYIDPAA) form a required for interaction with TRIB1 region. The interval 126 to 200 (PPGYGCAAAG…HASPAHLAAP (75 aa)) is required to induce adipocyte differentiation. K159 carries the post-translational modification N6-acetyllysine; alternate. A Glycyl lysine isopeptide (Lys-Gly) (interchain with G-Cter in SUMO); alternate cross-link involves residue K159. A Glycyl lysine isopeptide (Lys-Gly) (interchain with G-Cter in SUMO2); alternate cross-link involves residue K159. 2 disordered regions span residues 176–195 (LFPY…ASPA) and 213–310 (TMHL…NVET). Residues 179 to 191 (YQPPPPPPPPHPH) are compositionally biased toward pro residues. The tract at residues 180-194 (QPPPPPPPPHPHASP) is required to functionally cooperate with SREBF1 in promoter activation. S193 is subject to Phosphoserine. Positions 220–234 (HPTPPPTPVPSPHPA) are enriched in pro residues. 2 positions are modified to phosphothreonine; by GSK3: T222 and T226. S230 carries the post-translational modification Phosphoserine; by GSK3. The interaction with FOXO1 stretch occupies residues 240-358 (AGLPGPGGSL…SLVKAMGNCA (119 aa)). Residues 261-271 (TGGGGGGGAGA) are compositionally biased toward gly residues. The span at 276 to 292 (KSVDKNSNEYRVRRERN) shows a compositional bias: basic and acidic residues. Positions 282-345 (SNEYRVRRER…DTLRGIFRQL (64 aa)) constitute a bZIP domain. Residues 285-300 (YRVRRERNNIAVRKSR) mediate DNA binding. Residues 286-313 (RVRRERNNIAVRKSRDKAKQRNVETQQK) are basic motif. The interval 317–345 (LTSDNDRLRKRVEQLSRELDTLRGIFRQL) is leucine-zipper.

It belongs to the bZIP family. C/EBP subfamily. In terms of assembly, binds DNA as a homodimer and as a heterodimer. Can form stable heterodimers with CEBPB, CEBPD, CEBPE and CEBPG. Can form stable homodimers (also isoform 2 and isoform 3 dimers) and heterodimers with CEBPB (with isoform 2 and isoform 3) and CEBPG. Interacts with PRDM16. Interacts with UBN1. Interacts with ZNF638; this interaction increases transcriptional activation. Interacts with the complex TFDP2:E2F1; the interaction prevents CEBPA binding to target gene promoters and represses its transcriptional activity. Interacts with RB1. Interacts (when phosphorylated at Ser-193) with CDK2, CDK4, E2F4 and SMARCA2. Interacts with SREBPF1. Interacts with FOXO1 (via the Fork-head domain); the interaction increases when FOXO1 is deacetylated. Interacts with SIX1. Interacts (via recognition sequence) with TRIB1. As to quaternary structure, interacts with TAF1A and UBTF. Interacts with NPM1. Sumoylated, sumoylation blocks the inhibitory effect on cell proliferation by disrupting the interaction with SMARCA2. Post-translationally, phosphorylation at Ser-193 is required for interaction with CDK2, CDK4 and SWI/SNF complex leading to cell cycle inhibition. Dephosphorylated at Ser-193 by protein phosphatase 2A (PP2A) through PI3K/AKT signaling pathway regulation. Phosphorylation at Thr-222 and Thr-226 by GSK3 is constitutive in adipose tissue and lung. In liver, both Thr-222 and Thr-226 are phosphorylated only during feeding but not during fasting. Phosphorylation of the GSK3 consensus sites selectively decreases transactivation activity on IRE-controlled promoters. In terms of processing, ubiquitinated by COP1 upon interaction with TRIB1. In terms of tissue distribution, isoform 2 and isoform 3 are expressed in liver (at protein level).

It localises to the nucleus. The protein resides in the nucleolus. Transcription factor that coordinates proliferation arrest and the differentiation of myeloid progenitors, adipocytes, hepatocytes, and cells of the lung and the placenta. Binds directly to the consensus DNA sequence 5'-T[TG]NNGNAA[TG]-3' acting as an activator on distinct target genes. During early embryogenesis, plays essential and redundant functions with CEBPB. Essential for the transition from common myeloid progenitors (CMP) to granulocyte/monocyte progenitors (GMP). Critical for the proper development of the liver and the lung. Necessary for terminal adipocyte differentiation, is required for postnatal maintenance of systemic energy homeostasis and lipid storage. To regulate these different processes at the proper moment and tissue, interplays with other transcription factors and modulators. Down-regulates the expression of genes that maintain cells in an undifferentiated and proliferative state through E2F1 repression, which is critical for its ability to induce adipocyte and granulocyte terminal differentiation. Reciprocally E2F1 blocks adipocyte differentiation by binding to specific promoters and repressing CEBPA binding to its target gene promoters. Proliferation arrest also depends on a functional binding to SWI/SNF complex. In liver, regulates gluconeogenesis and lipogenesis through different mechanisms. To regulate gluconeogenesis, functionally cooperates with FOXO1 binding to IRE-controlled promoters and regulating the expression of target genes such as PCK1 or G6PC1. To modulate lipogenesis, interacts and transcriptionally synergizes with SREBF1 in promoter activation of specific lipogenic target genes such as ACAS2. In adipose tissue, seems to act as FOXO1 coactivator accessing to ADIPOQ promoter through FOXO1 binding sites. Functionally, can act as dominant-negative. Binds DNA and have transctivation activity, even if much less efficiently than isoform 2. Does not inhibit cell proliferation. In terms of biological role, directly and specifically enhances ribosomal DNA transcription interacting with RNA polymerase I-specific cofactors and inducing histone acetylation. This is CCAAT/enhancer-binding protein alpha from Rattus norvegicus (Rat).